We begin with the raw amino-acid sequence, 159 residues long: Major latex protein 146 (159 aa).

Belongs to the MLP family. Laticifer.

The protein resides in the vacuole. It localises to the cytoplasmic vesicle. Functionally, not known; MLPs constitute up to 50% of the soluble latex protein. This chain is Major latex protein 146 (MLP146), found in Papaver somniferum (Opium poppy).